A 95-amino-acid polypeptide reads, in one-letter code: Aspartyl/glutamyl-tRNA(Asn/Gln) amidotransferase subunit C (95 aa).

Belongs to the GatC family. As to quaternary structure, heterotrimer of A, B and C subunits.

The enzyme catalyses L-glutamyl-tRNA(Gln) + L-glutamine + ATP + H2O = L-glutaminyl-tRNA(Gln) + L-glutamate + ADP + phosphate + H(+). It catalyses the reaction L-aspartyl-tRNA(Asn) + L-glutamine + ATP + H2O = L-asparaginyl-tRNA(Asn) + L-glutamate + ADP + phosphate + 2 H(+). Allows the formation of correctly charged Asn-tRNA(Asn) or Gln-tRNA(Gln) through the transamidation of misacylated Asp-tRNA(Asn) or Glu-tRNA(Gln) in organisms which lack either or both of asparaginyl-tRNA or glutaminyl-tRNA synthetases. The reaction takes place in the presence of glutamine and ATP through an activated phospho-Asp-tRNA(Asn) or phospho-Glu-tRNA(Gln). This Phenylobacterium zucineum (strain HLK1) protein is Aspartyl/glutamyl-tRNA(Asn/Gln) amidotransferase subunit C.